The primary structure comprises 474 residues: Stabilizer of axonemal microtubules 1 (474 aa).

Mn stretches follow at residues 30–64 (KPCL…KGPI), 65–97 (PMEG…PSEE), 98–131 (NMDL…PCSD), 132–165 (KMEC…PASV), 166–199 (RFDN…LCNI), 200–232 (PLED…PCEI), 233–266 (PFES…GLDM), 267–299 (PFCN…PPED), 300–332 (RMDL…KKCG), 333–366 (RFEG…LPTE), 367–400 (PLDC…RGNV), and 401–434 (PVES…TFEE). The tract at residues 446–474 (VSQAGSQQSSHLSVDDSENPNQRELEVLA) is disordered. The segment covering 448 to 457 (QAGSQQSSHL) has biased composition (polar residues).

It belongs to the FAM154 family. In terms of assembly, associates with microtubules via the Mn regions. As to expression, widely expressed, with highest levels in testis. Expressed in mature spermatozoa (at protein level).

The protein localises to the cytoplasm. Its subcellular location is the cytoskeleton. It localises to the microtubule organizing center. The protein resides in the centrosome. It is found in the centriole. The protein localises to the cilium basal body. Its subcellular location is the cilium axoneme. It localises to the flagellum axoneme. Functionally, may play a role in the regulation of cilium length. Stabilizes microtubules at low temperature. This Homo sapiens (Human) protein is Stabilizer of axonemal microtubules 1 (SAXO1).